The sequence spans 390 residues: Putative 8-amino-7-oxononanoate synthase (390 aa).

A substrate-binding site is contributed by Arg-19. 105-106 (GY) lines the pyridoxal 5'-phosphate pocket. Residue His-130 participates in substrate binding. Residues Ser-177, 202-205 (DEAH), and 234-237 (TFSK) each bind pyridoxal 5'-phosphate. Residue Lys-237 is modified to N6-(pyridoxal phosphate)lysine. Position 351 (Thr-351) interacts with substrate.

This sequence belongs to the class-II pyridoxal-phosphate-dependent aminotransferase family. BioF subfamily. As to quaternary structure, homodimer. It depends on pyridoxal 5'-phosphate as a cofactor.

The enzyme catalyses 6-carboxyhexanoyl-[ACP] + L-alanine + H(+) = (8S)-8-amino-7-oxononanoate + holo-[ACP] + CO2. The protein operates within cofactor biosynthesis; biotin biosynthesis. Catalyzes the decarboxylative condensation of pimeloyl-[acyl-carrier protein] and L-alanine to produce 8-amino-7-oxononanoate (AON), [acyl-carrier protein], and carbon dioxide. This Geobacillus kaustophilus (strain HTA426) protein is Putative 8-amino-7-oxononanoate synthase (bioF).